Here is a 351-residue protein sequence, read N- to C-terminus: Photosystem II D2 protein (351 aa).

A helical membrane pass occupies residues 39-59 (CAFLALGGWLTGTTFVTSWYT). Residue H116 participates in chlorophyll a binding. The helical transmembrane segment at 123–139 (GFMLRQFEIARLVGIRP) threads the bilayer. Residues Q128 and N141 each coordinate pheophytin a. The helical transmembrane segment at 151-164 (VFVSVFLMYPLGQS) threads the bilayer. H196 lines the chlorophyll a pocket. A helical transmembrane segment spans residues 206 to 226 (GALLCAIHGATVENTLFEDGD). H213 and F260 together coordinate a plastoquinone. H213 is a Fe cation binding site. A Fe cation-binding site is contributed by H267. The helical transmembrane segment at 277–293 (GLWMSAVGIVGLALNLR) threads the bilayer.

The protein belongs to the reaction center PufL/M/PsbA/D family. As to quaternary structure, PSII is composed of 1 copy each of membrane proteins PsbA, PsbB, PsbC, PsbD, PsbE, PsbF, PsbH, PsbI, PsbJ, PsbK, PsbL, PsbM, PsbT, PsbX, PsbY, PsbZ, Psb30/Ycf12, peripheral proteins PsbO, CyanoQ (PsbQ), PsbU, PsbV and a large number of cofactors. It forms dimeric complexes. The D1/D2 heterodimer binds P680, chlorophylls that are the primary electron donor of PSII, and subsequent electron acceptors. It shares a non-heme iron and each subunit binds pheophytin, quinone, additional chlorophylls, carotenoids and lipids. There is also a Cl(-1) ion associated with D1 and D2, which is required for oxygen evolution. The PSII complex binds additional chlorophylls, carotenoids and specific lipids. serves as cofactor.

Its subcellular location is the cellular thylakoid membrane. It carries out the reaction 2 a plastoquinone + 4 hnu + 2 H2O = 2 a plastoquinol + O2. Functionally, photosystem II (PSII) is a light-driven water:plastoquinone oxidoreductase that uses light energy to abstract electrons from H(2)O, generating O(2) and a proton gradient subsequently used for ATP formation. It consists of a core antenna complex that captures photons, and an electron transfer chain that converts photonic excitation into a charge separation. The D1/D2 (PsbA/PsbD) reaction center heterodimer binds P680, the primary electron donor of PSII as well as several subsequent electron acceptors. D2 is needed for assembly of a stable PSII complex. This is Photosystem II D2 protein from Nostoc punctiforme (strain ATCC 29133 / PCC 73102).